A 353-amino-acid polypeptide reads, in one-letter code: Fasciclin-like arabinogalactan protein 21 (353 aa).

Positions 1-28 are cleaved as a signal peptide; sequence MGCCSSDCFVYFILSIALAFMAISTTLR. N51, N81, N94, N200, N249, and N315 each carry an N-linked (GlcNAc...) asparagine glycan. Residues 83 to 181 enclose the FAS1 1 domain; the sequence is TLFAIEDASF…HGVIGPFSPL (99 aa). The region spanning 254–352 is the FAS1 2 domain; sequence TILATPNLVS…GISHTLEIPH (99 aa).

The protein belongs to the fasciclin-like AGP family.

The protein localises to the secreted. Functionally, may be a cell surface adhesion protein. This Arabidopsis thaliana (Mouse-ear cress) protein is Fasciclin-like arabinogalactan protein 21 (FLA21).